Reading from the N-terminus, the 265-residue chain is Aquaporin-5 (265 aa).

Residues 1–12 lie on the Cytoplasmic side of the membrane; that stretch reads MKKEVCSAAFLK. Residues 13 to 33 traverse the membrane as a helical segment; sequence AVFAEFLATLIFVFFGLGSAL. At 34-39 the chain is on the extracellular side; that stretch reads KWPSAM. Residues 40–60 form a helical membrane-spanning segment; sequence PSVLQISLAFGLAIGTMAQAL. Residues 61–65 lie on the Cytoplasmic side of the membrane; that stretch reads GPVSG. The segment at residues 66–74 is an intramembrane region (discontinuously helical); that stretch reads GHMNPAITL. An NPA 1 motif is present at residues 69-71; that stretch reads NPA. Residues 75–87 are Cytoplasmic-facing; it reads ALLVGNQISLLRA. Residues 88–108 traverse the membrane as a helical segment; it reads VFYLVAQLVGAIAGAAILYGL. The Extracellular segment spans residues 109-126; it reads APYNARSNLAVNALNNNT. N-linked (GlcNAc...) asparagine glycosylation is found at asparagine 124 and asparagine 125. Residues 127–147 form a helical membrane-spanning segment; sequence TAGQAVVAEMILTFQLALCVF. The Cytoplasmic segment spans residues 148–158; sequence SSTDSRRTSPV. The chain crosses the membrane as a helical span at residues 159 to 179; that stretch reads GSPALSIGLSVTLGHLVGIYF. Threonine 180 is a topological domain (extracellular). The segment at residues 181-191 is an intramembrane region (discontinuously helical); it reads GCSMNPARSFG. An NPA 2 motif is present at residues 185–187; the sequence is NPA. Residues 192–203 lie on the Extracellular side of the membrane; it reads PAVIMSRFSSAH. Residues 204-224 form a helical membrane-spanning segment; the sequence is WVFWVGPIVGAATAAIIYFYL. The Cytoplasmic portion of the chain corresponds to 225 to 265; the sequence is LFPHSLSLSDRVAILKGTYEPDEDWEESQEERKKTMELTAH.

It belongs to the MIP/aquaporin (TC 1.A.8) family. Homotetramer; each monomer provides an independent water pore. Interacts with TRPV4; the interaction is probably indirect and regulates TRPV4 activation by hypotonicity.

It localises to the apical cell membrane. It is found in the cell membrane. Its subcellular location is the cytoplasmic vesicle membrane. The catalysed reaction is H2O(in) = H2O(out). In terms of biological role, aquaporins form homotetrameric transmembrane channels, with each monomer independently mediating water transport across the plasma membrane along its osmotic gradient. Plays an important role in fluid secretion in salivary glands. Required for TRPV4 activation by hypotonicity. Together with TRPV4, controls regulatory volume decrease in salivary epithelial cells. Seems to play a redundant role in water transport in the eye, lung and in sweat glands. This Ovis aries (Sheep) protein is Aquaporin-5.